Here is an 874-residue protein sequence, read N- to C-terminus: ATP-dependent RNA helicase DDX54 (874 aa).

The segment at Met-1–Val-76 is disordered. A compositionally biased stretch (basic residues) spans Trp-20–Thr-30. Phosphothreonine is present on Thr-30. Ser-33, Ser-38, Ser-40, and Ser-74 each carry phosphoserine. The span at Asp-39–Glu-50 shows a compositional bias: acidic residues. The Q motif motif lies at Gly-95–Arg-123. Residues Ile-126 to Ile-298 form the Helicase ATP-binding domain. Ala-139 to Thr-146 is a binding site for ATP. The DEAD box signature appears at Asp-246–Asp-249. The 145-residue stretch at Tyr-328 to Ala-472 folds into the Helicase C-terminal domain. Polar residues predominate over residues Ala-581–Met-590. The tract at residues Ala-581–Leu-687 is disordered. A compositionally biased stretch (low complexity) spans Thr-636 to Val-645. Basic and acidic residues predominate over residues Glu-664 to Arg-685. Ser-688 and Ser-690 each carry phosphoserine. The interval Ala-712–Met-874 is disordered. Polar residues predominate over residues Gln-713–Leu-722. Basic and acidic residues-rich tracts occupy residues Gln-737–Ser-747 and Tyr-755–Asp-771. Phosphoserine occurs at positions 774 and 780. Residues Met-812–Leu-823 are compositionally biased toward basic and acidic residues. The segment covering Pro-864–Met-874 has biased composition (basic residues).

The protein belongs to the DEAD box helicase family. DDX54/DBP10 subfamily. In terms of assembly, interacts in a hormone-dependent manner with nuclear receptors.

Its subcellular location is the nucleus. The protein resides in the nucleolus. The catalysed reaction is ATP + H2O = ADP + phosphate + H(+). Functionally, has RNA-dependent ATPase activity. Represses the transcriptional activity of nuclear receptors. The protein is ATP-dependent RNA helicase DDX54 (Ddx54) of Mus musculus (Mouse).